The sequence spans 203 residues: Ribosomal RNA small subunit methyltransferase G (203 aa).

S-adenosyl-L-methionine is bound by residues Gly73, Leu78, 124–125, and Arg139; that span reads VE.

This sequence belongs to the methyltransferase superfamily. RNA methyltransferase RsmG family.

The protein resides in the cytoplasm. It carries out the reaction guanosine(527) in 16S rRNA + S-adenosyl-L-methionine = N(7)-methylguanosine(527) in 16S rRNA + S-adenosyl-L-homocysteine. In terms of biological role, specifically methylates the N7 position of guanine in position 527 of 16S rRNA. The chain is Ribosomal RNA small subunit methyltransferase G from Haemophilus influenzae (strain 86-028NP).